The primary structure comprises 473 residues: Probable transporter MCH2 (473 aa).

Topologically, residues 1 to 37 are cytoplasmic; that stretch reads MSEERHEDHHRDVENKLNLNGKDDINGNTSISIEVPD. Residues 38-58 traverse the membrane as a helical segment; it reads GGYGWFILLAFILYNFSTWGA. Over 59–83 the chain is Extracellular; the sequence is NSGYAIYLAHYLENNTFAGGSKLDY. N-linked (GlcNAc...) asparagine glycosylation is present at asparagine 72. The helical transmembrane segment at 84–105 threads the bilayer; the sequence is ASIGGLAFSCGLFFAPVITWLY. Residues 106–111 lie on the Cytoplasmic side of the membrane; it reads HIFSIQ. The helical transmembrane segment at 112–135 threads the bilayer; the sequence is FIIGLGILFQGAALLLAAFSVTLW. Residues 136 to 141 are Extracellular-facing; sequence EIYLTQ. The helical transmembrane segment at 142 to 163 threads the bilayer; the sequence is GVLIGFGLAFIFIPSVTLIPLW. Residues 164 to 169 are Cytoplasmic-facing; the sequence is FRNKRS. The helical transmembrane segment at 170–186 threads the bilayer; that stretch reads LASGIGTAGSGLGGIVF. Topologically, residues 187 to 200 are extracellular; that stretch reads NLGMQSILQKRGVK. A helical membrane pass occupies residues 201–220; it reads WALIAQCIICTSLSTIALML. Residues 221 to 243 are Cytoplasmic-facing; that stretch reads TRTTHQGLRQHKRSYKFELLDYD. The helical transmembrane segment at 244-268 threads the bilayer; that stretch reads VLSNFAVWLLFGFVSFAMLGYVVLL. The Extracellular portion of the chain corresponds to 269 to 286; it reads YSLSDFTVSLGYTSKQGS. The helical transmembrane segment at 287–304 threads the bilayer; sequence YVSCMVSVGSLLGRPIVG. At 305-312 the chain is on the cytoplasmic side; sequence HIADKYGS. The helical transmembrane segment at 313-332 threads the bilayer; it reads LTVGMILHLVMAILCWAMWI. Over 333–342 the chain is Extracellular; that stretch reads PCKNLATAIA. Residues 343 to 362 form a helical membrane-spanning segment; that stretch reads FGLLVGSIMGTIWPTIASIV. Over 363-370 the chain is Cytoplasmic; that stretch reads TRIVGLQK. A helical membrane pass occupies residues 371–394; sequence LPGTFGSTWIFMAAFALVAPIIGL. Topologically, residues 395–408 are extracellular; sequence ELRSTDTNGNDYYR. A helical transmembrane segment spans residues 409-433; that stretch reads TAIFVGFAYFGVSLCQWLLRGFIIA. Residues 434–473 lie on the Cytoplasmic side of the membrane; that stretch reads RDEIAVREAYSADQNELHLNVKLSHMSKCLFRYKQLPRRV.

This sequence belongs to the major facilitator superfamily. Monocarboxylate porter (TC 2.A.1.13) family.

The protein localises to the membrane. Functionally, probable transporter. Does not act in the transport of monocarboxylic acids across the plasma membrane. This chain is Probable transporter MCH2 (MCH2), found in Saccharomyces cerevisiae (strain ATCC 204508 / S288c) (Baker's yeast).